The chain runs to 600 residues: Proline--tRNA ligase (600 aa).

It belongs to the class-II aminoacyl-tRNA synthetase family. ProS type 1 subfamily. As to quaternary structure, homodimer.

It localises to the cytoplasm. The catalysed reaction is tRNA(Pro) + L-proline + ATP = L-prolyl-tRNA(Pro) + AMP + diphosphate. Its function is as follows. Catalyzes the attachment of proline to tRNA(Pro) in a two-step reaction: proline is first activated by ATP to form Pro-AMP and then transferred to the acceptor end of tRNA(Pro). As ProRS can inadvertently accommodate and process non-cognate amino acids such as alanine and cysteine, to avoid such errors it has two additional distinct editing activities against alanine. One activity is designated as 'pretransfer' editing and involves the tRNA(Pro)-independent hydrolysis of activated Ala-AMP. The other activity is designated 'posttransfer' editing and involves deacylation of mischarged Ala-tRNA(Pro). The misacylated Cys-tRNA(Pro) is not edited by ProRS. This is Proline--tRNA ligase from Synechococcus sp. (strain ATCC 27144 / PCC 6301 / SAUG 1402/1) (Anacystis nidulans).